The chain runs to 1170 residues: Thrombospondin-1 (1170 aa).

The N-terminal stretch at 1-18 (MGLAWGLGVLLLLHACGS) is a signal peptide. The tract at residues 47–95 (RLVKGPDPSSPAFRIEDANLIPPVPDKKFQDLVDAVRAEKGFLLLASLR) is heparin-binding. A Laminin G-like domain is found at 65-270 (NLIPPVPDKK…HKTKDLQAIC (206 aa)). C171 and C232 are disulfide-bonded. 2 N-linked (GlcNAc...) asparagine glycosylation sites follow: N248 and N360. The VWFC domain occupies 316–373 (PLCYHNGVQYRTGDEWTVDSCTECRCQNSVTICKKVSCPIMPCSNATVPDGECCPRCW). TSP type-1 domains are found at residues 379-429 (DDGW…QECD), 435-490 (DGGW…DSCP), and 492-547 (NGGW…QDCP). Intrachain disulfides connect C391–C423, C395–C428, C406–C413, C447–C484, C451–C489, C462–C474, C504–C541, C508–C546, C519–C531, C551–C562, C556–C572, C575–C586, C592–C608, C599–C617, C620–C644, C650–C663, C657–C676, C678–C689, C705–C713, C718–C738, C754–C774, C777–C797, C813–C833, C836–C856, C874–C894, C910–C930, and C946–C1167. An EGF-like 1 domain is found at 547-587 (PIDGCLSNPCFAGVQCTSYPDGSWKCGACPPGYSGDGVECK). O-linked (Xyl) serine glycosylation is present at S553. The region spanning 646 to 690 (PRNPCTDGTHDCNKNAKCNYLGHYSDPMYRCECKPGYAGNGIICG) is the EGF-like 2 domain. TSP type-3 repeat units lie at residues 691-726 (EDTD…NSGQ), 727-762 (EDYD…NPAQ), 763-785 (YDYD…NPDQ), 786-821 (ADTD…NVDQ), 822-844 (KDTD…NPDQ), 845-882 (LDSD…NANQ), 883-918 (ADHD…NPDQ), and 919-954 (KDSD…DISE). Residue N708 is glycosylated (N-linked (GlcNAc...) asparagine). Residues 839 to 944 (EHNPDQLDSD…DQDKVPDIDD (106 aa)) are disordered. Composition is skewed to basic and acidic residues over residues 840-854 (HNPD…RIGD), 883-894 (ADHDKDGKGDAC), and 917-941 (DQKD…KVPD). Positions 926-928 (RGD) match the Cell attachment site motif. A TSP C-terminal domain is found at 958–1170 (RRFQMIPLDP…SDLKYECRDS (213 aa)). N-linked (GlcNAc...) asparagine glycosylation is found at N1067 and N1085.

The protein belongs to the thrombospondin family. Homotrimer; disulfide-linked. Can bind to fibrinogen, fibronectin, laminin, type V collagen and integrins alpha-V/beta-1, alpha-V/beta-3 and alpha-IIb/beta-3. Binds heparin. Interacts (via the C-terminal domain) with CD47. Interacts (via the TSP type I repeats) with CD36; the interaction conveys an antiangiogenic effect. Interacts (via the TSP type I repeats) with HRG; the interaction blocks the antiangiogenic effect of THBS1 with CD36. Interacts with ATF6 (via lumenal domain). Interacts with FN1; this interaction is enhanced by TNFAIP6, which may act as a bridging molecule between FN1 and THBS1. Interacts with SIRPA; the interaction stimulates phosphorylation of SIRPA. In terms of tissue distribution, odontoblasts.

The protein localises to the secreted. Its subcellular location is the cell surface. It is found in the extracellular space. The protein resides in the extracellular matrix. It localises to the endoplasmic reticulum. The protein localises to the sarcoplasmic reticulum. Functionally, adhesive glycoprotein that mediates cell-to-cell and cell-to-matrix interactions. Multifunctional, involved in inflammation, angiogenesis, wound healing, reactive oxygen species (ROS) signaling, nitrous oxide (NO) signaling, apoptosis, senescence, aging, cellular self-renewal, stemness, and cardiovascular and metabolic homeostasis. Negatively modulates dendritic cell activation and cytokine release, as part of an autocrine feedback loop, contributing to the resolution of inflammation and immune homeostasis. Ligand for receptor CD47. Modulates nitrous oxide (NO) signaling via CD47, hence playing a role as a pressor agent, supporting blood pressure. Plays a role in endothelial cell senescence, acting via CD47, by increasing the abundance and activation of NADPH oxidase NOX1, and so generating excess ROS. Inhibits stem cell self-renewal, acting via CD47 signaling, probably by regulation of the stem cell transcription factors POU5F1/OCT4, SOX2, MYC/c-Myc and KLF4. Negatively modulates wound healing, acting via CD47. Ligand for receptor CD36. Involved in inducing apoptosis in podocytes in response to elevated free fatty acids, acting via CD36. Plays a role in suppressing angiogenesis, acting, depending on context, via CD36 or CD47. Promotes cellular senescence in a TP53-CDKN1A-RB1 signaling-dependent manner. Ligand for immunoglobulin-like cell surface receptor SIRPA. Involved in ROS signaling in non-phagocytic cells, stimulating NADPH oxidase-derived ROS production, acting via interaction with SIRPA. Plays a role in metabolic dysfunction in diet-induced obesity, perhaps acting by exacerbating adipose inflammatory activity; its effects may be mediated, at least in part, through enhanced adipocyte proliferation. Plays a role in ER stress response, via its interaction with the activating transcription factor 6 alpha (ATF6) which produces adaptive ER stress response factors. May be involved in age-related conditions, including metabolic dysregulation, during normal aging. This is Thrombospondin-1 (THBS1) from Bos taurus (Bovine).